A 353-amino-acid polypeptide reads, in one-letter code: MLQKPVQLLLWVAICLLVLLTVYVFFMLDMLWSPFWLVIKTIFIPLIISIFISYLLLPVTEWLHGKGLPRTLSILVIYVLFFGGIGWALYKGVPVLIVQLTDLSENIPMFAETYNGLLLHVHNHTDDWPDGMHHRIDKMIRQTEAFFAGTIEGAISGIRNVLDYFLIAATIPFLVFYMVKDIELMKKTVWYLTPKSWRKRGSAFLRDVDDSLGDYIRGQLLVCLILGVIAGISFWVFGLPYPLILGLISGVTNVIPYFGPFIGAVPALLIAMTISVKAVLVVVITVFILQFMEGNILSPFIVGRSLKMHPVVIMLALLAGGELAGIVGMILAVPATAVLKVMMIHFLRMRTEH.

A run of 8 helical transmembrane segments spans residues 8-28 (LLLWVAICLLVLLTVYVFFML), 37-57 (LVIKTIFIPLIISIFISYLLL), 77-97 (IYVLFFGGIGWALYKGVPVLI), 165-185 (FLIAATIPFLVFYMVKDIELM), 220-240 (LLVCLILGVIAGISFWVFGLP), 243-263 (LILGLISGVTNVIPYFGPFIG), 269-289 (LIAMTISVKAVLVVVITVFIL), and 311-331 (VVIMLALLAGGELAGIVGMIL).

It belongs to the autoinducer-2 exporter (AI-2E) (TC 2.A.86) family.

The protein resides in the cell membrane. The chain is Putative transport protein YrrI (yrrI) from Bacillus subtilis (strain 168).